We begin with the raw amino-acid sequence, 719 residues long: MSGMGIAILCIVRTKIYRITISFDYSTLMSPFFLFLMMPTTLKDGYRMNSQVNEDAIGINLDLSLPTHISPTTGSESASGSNASTLRNDGNALDGGLLRTSAAISAPTGTSQPTETIGEKLSNEERVNSNVSASNSTTAGTGRMLSQSLTNDSPSNEISTDQLKIFQRMDEMSARMIEMEESFNKLSNKIAEQNTMVLNLKQDNYKVMNKLNILLKLVAQPSARPSTNNAQNKLAIELLNSISAVSSAYLQKMQNNGSGRQHTADLCTGDSNTHSGINQHRTTNGTIDVNTNTAQLNNQFSNALNTILPDQQHNRNNVSQNINQSLPNRQLGPVINTQANQNQSQVLIHNTNTHQQVNRSPISFPNASTDKPFKLNPNGIKRRRRNTQSNNNASTNDHASAAQKPISALSPLTNSHNSTTSMNYTNSSIHSGVTSASNSFHDLNSLNNFGTTTALSLPSLALDNASFPPNQNVIPPIINNTQQPLSFSQLINQDSTTSELLPSGKSGVNTNIVNRNRASTLPSYPKPMTVKSNVDDDGYQEDDDDDGDDEGDGRDNEEDSTAEEDEVDDEIETDMKNASINKRRRSLHHKKSNSLNGRRKLHGESATKPNINSDLHYRILKAPTDVKTIWEEYDTGIRGKPSIKHLEAKYGNKWRLNKNKKTFSRRKRLYKFILNGMERGKTAQEMIETLENKRLYKDDEDGEVKKRTIGWLQESLAGI.

Over residues 68 to 88 (HISPTTGSESASGSNASTLRN) the composition is skewed to polar residues. Disordered stretches follow at residues 68 to 90 (HISP…RNDG), 102 to 159 (AAIS…NEIS), 353 to 402 (THQQ…ASAA), and 496 to 610 (TTSE…TKPN). Residues 117–127 (IGEKLSNEERV) are compositionally biased toward basic and acidic residues. Residues 128–143 (NSNVSASNSTTAGTGR) show a composition bias toward low complexity. 4 stretches are compositionally biased toward polar residues: residues 144 to 159 (MLSQ…NEIS), 353 to 369 (THQQ…NAST), 387 to 398 (TQSNNNASTNDH), and 496 to 522 (TTSE…STLP). Ser-146 and Ser-153 each carry phosphoserine. Acidic residues predominate over residues 535 to 572 (DDDGYQEDDDDDGDDEGDGRDNEEDSTAEEDEVDDEIE). The segment covering 581-601 (NKRRRSLHHKKSNSLNGRRKL) has biased composition (basic residues).

Belongs to the HOT1 family. In terms of assembly, interacts with HOG1. In terms of processing, hyperphosphorylated during acute stress.

Its subcellular location is the nucleus. Its function is as follows. Required for a complete transcriptional response to osmotic stress, through recruitment of HOG1 followed by pol II recruitment to the promoters of GPD1 and other HOG-dependent genes. This chain is High-osmolarity-induced transcription protein 1 (HOT1), found in Saccharomyces cerevisiae (strain ATCC 204508 / S288c) (Baker's yeast).